The primary structure comprises 342 residues: tRNA-specific 2-thiouridylase MnmA 2 (342 aa).

Residue Cys62 is the Nucleophile of the active site. Residues Cys62 and Cys160 are joined by a disulfide bond. ATP is bound at residue Gly86. The interval 110 to 112 (KDQ) is interaction with tRNA. Cys160 acts as the Cysteine persulfide intermediate in catalysis. The tract at residues 268–269 (RY) is interaction with tRNA.

It belongs to the MnmA/TRMU family.

The protein localises to the cytoplasm. The catalysed reaction is S-sulfanyl-L-cysteinyl-[protein] + uridine(34) in tRNA + AH2 + ATP = 2-thiouridine(34) in tRNA + L-cysteinyl-[protein] + A + AMP + diphosphate + H(+). In terms of biological role, catalyzes the 2-thiolation of uridine at the wobble position (U34) of tRNA, leading to the formation of s(2)U34. This Syntrophus aciditrophicus (strain SB) protein is tRNA-specific 2-thiouridylase MnmA 2.